We begin with the raw amino-acid sequence, 168 residues long: S-ribosylhomocysteine lyase (168 aa).

3 residues coordinate Fe cation: histidine 54, histidine 58, and cysteine 128.

It belongs to the LuxS family. Homodimer. Fe cation is required as a cofactor.

It carries out the reaction S-(5-deoxy-D-ribos-5-yl)-L-homocysteine = (S)-4,5-dihydroxypentane-2,3-dione + L-homocysteine. Functionally, involved in the synthesis of autoinducer 2 (AI-2) which is secreted by bacteria and is used to communicate both the cell density and the metabolic potential of the environment. The regulation of gene expression in response to changes in cell density is called quorum sensing. Catalyzes the transformation of S-ribosylhomocysteine (RHC) to homocysteine (HC) and 4,5-dihydroxy-2,3-pentadione (DPD). The protein is S-ribosylhomocysteine lyase of Mannheimia succiniciproducens (strain KCTC 0769BP / MBEL55E).